The sequence spans 263 residues: Elongin-A (263 aa).

Disordered regions lie at residues 112 to 147 and 170 to 263; these read KLEQ…YCPK and SATS…PKRI. 2 stretches are compositionally biased toward polar residues: residues 186-206 and 214-229; these read RSSS…NTYP and SFTS…VKTQ. Low complexity predominate over residues 230–245; that stretch reads PSSSSSPSISRPTSFP. Residues 253–263 show a composition bias toward polar residues; the sequence is SRFSSQVPKRI.

This sequence belongs to the ELA1 family. Heterodimer with elc1. Component of a CRL3 E3 ubiquitin ligase complex consisting of a cullin, the linker protein elc1, the substrate receptor pof4/ela1, and the RING protein rbx1. Interacts with skp1.

Its function is as follows. As part of the CRL3 E3 ubiquitin ligase complex; polyubiquitylates monoubiquitylated RNA polymerase II subunit rpb1 to trigger its proteolysis; plays a role in global genomic repair. The protein is Elongin-A (pof4) of Schizosaccharomyces pombe (strain 972 / ATCC 24843) (Fission yeast).